The chain runs to 1152 residues: Syntaxin-binding protein 5 (1152 aa).

Residues T14–E35 form a disordered region. Residues S17 to Q28 show a composition bias toward low complexity. WD repeat units lie at residues S62 to Q95, V102 to F141, V146 to I182, H201 to Y235, I241 to P273, P295 to A337, I345 to L379, T401 to K478, Q506 to I620, and T634 to G696. Disordered regions lie at residues T557–D596 and S675–N731. S693 carries the phosphoserine modification. Residues S713 to H722 show a composition bias toward low complexity. S724 carries the phosphoserine; by PKA modification. S760 carries the post-translational modification Phosphoserine. Phosphothreonine is present on T763. S783 carries the post-translational modification Phosphoserine. Residue T785 is modified to Phosphothreonine. Residue S786 is modified to Phosphoserine. WD repeat units lie at residues I795–I852, R861–A935, I940–Y984, and C998–Q1021. A compositionally biased stretch (basic and acidic residues) spans W879–K893. The disordered stretch occupies residues W879–S907. Phosphoserine is present on residues S901 and S903. T1040 carries the phosphothreonine modification. S1059 and S1132 each carry phosphoserine. Residues G1087–K1147 enclose the v-SNARE coiled-coil homology domain.

The protein belongs to the WD repeat L(2)GL family. Part of a complex that contains STXBP5, STX4A and SNAP23. Interacts with STX1A and STX4A via its v-SNARE homology domain. Part of a complex that contains STX1, STXBP5, SNAP25 and SYT1. Post-translationally, phosphorylation by PKA reduces interaction with STX1A and enhances synaptic neurotransmitter release. In terms of tissue distribution, isoform 1 is detected in heart, brain, lung, liver, skeletal muscle, kidney and testis. Isoform 2 is detected in brain and in testis. Isoform 3 is detected in testis.

Its subcellular location is the cytoplasm. The protein localises to the cell membrane. It is found in the cytoplasmic vesicle membrane. It localises to the synapse. The protein resides in the cytoplasmic vesicle. Its subcellular location is the secretory vesicle. The protein localises to the synaptic vesicle. Its function is as follows. Inhibits translocation of GLUT4 from intracellular vesicles to the plasma membrane. Plays a regulatory role in calcium-dependent exocytosis and neurotransmitter release. Inhibits membrane fusion between transport vesicles and the plasma membrane. May modulate the assembly of trans-SNARE complexes between transport vesicles and the plasma membrane. Competes with STXBP1 for STX1 binding. This is Syntaxin-binding protein 5 (Stxbp5) from Rattus norvegicus (Rat).